The chain runs to 104 residues: 11 kDa late embryogenesis abundant protein (104 aa).

Residues 1–24 (MQSGKNAAASAKETAANVAASAKA) are compositionally biased toward low complexity. The tract at residues 1–104 (MQSGKNAAAS…TGHRTGTGGI (104 aa)) is disordered. A compositionally biased stretch (basic and acidic residues) spans 25-74 (GMEKTKASLQEKGEKMTAHDPMQKEMAREKKEERKHEAEYEKQAAKEHNA). The span at 75 to 89 (AQKQTTGIGTGTHSY) shows a compositional bias: polar residues.

Belongs to the LEA type 1 family. In terms of tissue distribution, maximally expressed in dry seeds. Also present in mid-maturation embryos.

Its function is as follows. LEA proteins are late embryonic proteins abundant in higher plant seed embryos. They may play an essential role in seed survival and in controlling water exchanges during seed desiccation and imbibition. The protein is 11 kDa late embryogenesis abundant protein of Helianthus annuus (Common sunflower).